The primary structure comprises 530 residues: Phosphoenolpyruvate carboxykinase (ATP) (530 aa).

Substrate contacts are provided by Arg-57, Tyr-193, and Lys-199. ATP contacts are provided by residues Lys-199, His-218, and 234-242 (GLSGTGKTT). Mn(2+) contacts are provided by Lys-199 and His-218. Asp-255 serves as a coordination point for Mn(2+). The ATP site is built by Glu-283, Arg-320, and Thr-445. Arg-320 is a substrate binding site.

This sequence belongs to the phosphoenolpyruvate carboxykinase (ATP) family. Mn(2+) is required as a cofactor.

It localises to the cytoplasm. It catalyses the reaction oxaloacetate + ATP = phosphoenolpyruvate + ADP + CO2. It functions in the pathway carbohydrate biosynthesis; gluconeogenesis. Involved in the gluconeogenesis. Catalyzes the conversion of oxaloacetate (OAA) to phosphoenolpyruvate (PEP) through direct phosphoryl transfer between the nucleoside triphosphate and OAA. The chain is Phosphoenolpyruvate carboxykinase (ATP) from Leptospira biflexa serovar Patoc (strain Patoc 1 / Ames).